A 904-amino-acid polypeptide reads, in one-letter code: Shieldin complex subunit 2 (904 aa).

The sufficient for interaction with SHLD3 and MAD2L2 stretch occupies residues 1-60 (MSGGSQVHIFWGAPVAPLKMTVSQDTASLMSVADPWKKIHLLYSQHSLYLKDEKQHKNLE). The interaction with ASTE1 stretch occupies residues 1–568 (MSGGSQVHIF…AYVSSKHSYL (568 aa)). The segment at 721–891 (KCSGVVLIQA…LQQDFSLLDF (171 aa)) is mediates interaction with SHLD1.

It belongs to the SHLD2 family. As to quaternary structure, component of the shieldin complex, consisting of SHLD1, SHLD2, SHLD3 and MAD2L2/REV7. Within the complex, SHLD2 forms a scaffold which interacts with a SHLD3-MAD2L2 subcomplex via its N-terminus, and with SHLD1 via its C-terminus. Interacts with TP53BP1. Interacts with RIF1. Interacts with ASTE1.

The protein localises to the chromosome. In terms of biological role, component of the shieldin complex, which plays an important role in repair of DNA double-stranded breaks (DSBs). During G1 and S phase of the cell cycle, the complex functions downstream of TP53BP1 to promote non-homologous end joining (NHEJ) and suppress DNA end resection. Mediates various NHEJ-dependent processes including immunoglobulin class-switch recombination, and fusion of unprotected telomeres. In Pongo abelii (Sumatran orangutan), this protein is Shieldin complex subunit 2.